The primary structure comprises 357 residues: Homoserine kinase (357 aa).

It belongs to the GHMP kinase family. Homoserine kinase subfamily.

It carries out the reaction L-homoserine + ATP = O-phospho-L-homoserine + ADP + H(+). The protein operates within amino-acid biosynthesis; L-threonine biosynthesis; L-threonine from L-aspartate: step 4/5. In terms of biological role, commits homoserine to the threonine biosynthesis pathway by catalyzing its O-phosphorylation. The polypeptide is Homoserine kinase (Cryptococcus neoformans var. grubii serotype A (strain H99 / ATCC 208821 / CBS 10515 / FGSC 9487) (Filobasidiella neoformans var. grubii)).